A 311-amino-acid chain; its full sequence is Methionyl-tRNA formyltransferase (311 aa).

110-113 (SLLP) contacts (6S)-5,6,7,8-tetrahydrofolate.

It belongs to the Fmt family.

It carries out the reaction L-methionyl-tRNA(fMet) + (6R)-10-formyltetrahydrofolate = N-formyl-L-methionyl-tRNA(fMet) + (6S)-5,6,7,8-tetrahydrofolate + H(+). Attaches a formyl group to the free amino group of methionyl-tRNA(fMet). The formyl group appears to play a dual role in the initiator identity of N-formylmethionyl-tRNA by promoting its recognition by IF2 and preventing the misappropriation of this tRNA by the elongation apparatus. This Streptococcus pneumoniae serotype 19F (strain G54) protein is Methionyl-tRNA formyltransferase.